Reading from the N-terminus, the 473-residue chain is Xylosidase/arabinosidase (473 aa).

The Proton acceptor role is filled by D18. E209 (proton donor) is an active-site residue.

Belongs to the glycosyl hydrolase 43 family. As to quaternary structure, homotetramer.

The enzyme catalyses Hydrolysis of (1-&gt;4)-beta-D-xylans, to remove successive D-xylose residues from the non-reducing termini.. It catalyses the reaction Hydrolysis of terminal non-reducing alpha-L-arabinofuranoside residues in alpha-L-arabinosides.. This chain is Xylosidase/arabinosidase (xylA), found in Thermoclostridium stercorarium (Clostridium stercorarium).